A 381-amino-acid polypeptide reads, in one-letter code: Protein COS8 (381 aa).

The Extracellular segment spans residues 1–42 (MKENEVKDEKSVDVLSFKQLEFQKTVLPQDVFRNELTWFCYE). Residues 43-63 (IYKSLAFRIWMLLWLPLSVWW) traverse the membrane as a helical segment. Topologically, residues 64–72 (KLSSNWIHP) are cytoplasmic. Residues 73–93 (LIVSLLVLFLGPFFVLVICGL) traverse the membrane as a helical segment. The Extracellular segment spans residues 94–237 (SRKRSLSKQL…WILKRIFNLR (144 aa)). A helical membrane pass occupies residues 238–258 (CLPLFLYYFLIVYTSGNADLI). Over 259 to 381 (SRFLFPVVMF…QSARNEKPLK (123 aa)) the chain is Cytoplasmic.

The protein belongs to the DUP/COS family.

The protein resides in the membrane. This chain is Protein COS8 (COS8), found in Saccharomyces cerevisiae (strain ATCC 204508 / S288c) (Baker's yeast).